Consider the following 351-residue polypeptide: Spindolin (351 aa).

The first 20 residues, Met-1 to Gly-20, serve as a signal peptide directing secretion.

Homodimer; disulfide-linked.

In terms of biological role, this protein is a spindle body protein. The protein is Spindolin of Lepidoptera (butterflies and moths).